Here is a 326-residue protein sequence, read N- to C-terminus: Serpentine receptor class gamma-14 (326 aa).

The next 7 membrane-spanning stretches (helical) occupy residues 36 to 56 (QIIY…TILW), 67 to 83 (FFTL…SILI), 115 to 135 (IIML…VLLV), 156 to 176 (LKYV…NIAI), 204 to 224 (FQLV…AITL), 243 to 263 (VIIS…SFFF), and 274 to 294 (GFSF…MICV).

It belongs to the nematode receptor-like protein srg family.

Its subcellular location is the membrane. The sequence is that of Serpentine receptor class gamma-14 (srg-14) from Caenorhabditis elegans.